The sequence spans 97 residues: Small ribosomal subunit protein bS18c (97 aa).

It belongs to the bacterial ribosomal protein bS18 family. In terms of assembly, part of the 30S ribosomal subunit.

It is found in the plastid. It localises to the chloroplast. In Oenothera glazioviana (Large-flowered evening primrose), this protein is Small ribosomal subunit protein bS18c.